The primary structure comprises 49 residues: uncharacterized protein (49 aa).

Belongs to the metallo-dependent hydrolases superfamily. TatD-type hydrolase family. A divalent metal cation serves as cofactor.

This is an uncharacterized protein from Geobacillus stearothermophilus (Bacillus stearothermophilus).